A 723-amino-acid polypeptide reads, in one-letter code: ABC transporter F family member 4 (723 aa).

A disordered region spans residues 1 to 117 (MGKKKSDESA…KEQKKREAKE (117 aa)). A compositionally biased stretch (basic and acidic residues) spans 18-31 (SGKDASKDSKKEKL). The segment covering 50-65 (GSSSRTKAAPKSTSYT) has biased composition (polar residues). Residues 72 to 84 (PSDEEDDGESDEE) are compositionally biased toward acidic residues. Residues 95-117 (KSEQRHLEISVTDKEQKKREAKE) show a composition bias toward basic and acidic residues. Residues 163–423 (ITIESFSVSA…EMNKKFDVYD (261 aa)) form the ABC transporter 1 domain. 195–202 (GPNGMGKS) is an ATP binding site. Disordered regions lie at residues 256-275 (LQKS…DDDD) and 427-472 (KAAK…APEA). Residues 266-275 (ENVDGEDDDD) show a composition bias toward acidic residues. The span at 437 to 446 (QQEKVKDRAK) shows a compositional bias: basic and acidic residues. An ABC transporter 2 domain is found at 496 to 721 (LQLIEVSFSY…DLQREIKAEV (226 aa)). Position 530–537 (530–537 (GPNGAGKS)) interacts with ATP.

The protein belongs to the ABC transporter superfamily. ABCF family. EF3 (TC 3.A.1.121) subfamily.

This Arabidopsis thaliana (Mouse-ear cress) protein is ABC transporter F family member 4 (ABCF4).